Reading from the N-terminus, the 126-residue chain is Arginine decarboxylase proenzyme (126 aa).

The active-site Schiff-base intermediate with substrate; via pyruvic acid is the Ser74. Ser74 bears the Pyruvic acid (Ser); by autocatalysis mark. His79 (proton acceptor; for processing activity) is an active-site residue. Cys94 (proton donor; for catalytic activity) is an active-site residue.

This sequence belongs to the prokaryotic AdoMetDC family. Type 1 subfamily. In terms of assembly, heterooctamer of four alpha and four beta chains arranged as a tetramer of alpha/beta heterodimers. Requires pyruvate as cofactor. Post-translationally, is synthesized initially as an inactive proenzyme. Formation of the active enzyme involves a self-maturation process in which the active site pyruvoyl group is generated from an internal serine residue via an autocatalytic post-translational modification. Two non-identical subunits are generated from the proenzyme in this reaction, and the pyruvate is formed at the N-terminus of the alpha chain, which is derived from the carboxyl end of the proenzyme. The post-translation cleavage follows an unusual pathway, termed non-hydrolytic serinolysis, in which the side chain hydroxyl group of the serine supplies its oxygen atom to form the C-terminus of the beta chain, while the remainder of the serine residue undergoes an oxidative deamination to produce ammonia and the pyruvoyl group blocking the N-terminus of the alpha chain.

The enzyme catalyses L-arginine + H(+) = agmatine + CO2. The protein operates within amine and polyamine biosynthesis; agmatine biosynthesis; agmatine from L-arginine: step 1/1. In terms of biological role, specifically catalyzes the decarboxylation of L-arginine to agmatine. Has no S-adenosylmethionine decarboxylase (AdoMetDC) activity. This is Arginine decarboxylase proenzyme from Pyrobaculum islandicum (strain DSM 4184 / JCM 9189 / GEO3).